The chain runs to 403 residues: Multifunctional CCA protein (403 aa).

ATP-binding residues include Gly-8 and Arg-11. 2 residues coordinate CTP: Gly-8 and Arg-11. Mg(2+) contacts are provided by Asp-21 and Asp-23. ATP-binding residues include Arg-91, Arg-137, and Arg-140. Residues Arg-91, Arg-137, and Arg-140 each contribute to the CTP site. The HD domain maps to 228–329; the sequence is TGIHTLMVAK…LKVLGLLDVW (102 aa).

This sequence belongs to the tRNA nucleotidyltransferase/poly(A) polymerase family. Bacterial CCA-adding enzyme type 1 subfamily. Monomer. Can also form homodimers and oligomers. Mg(2+) is required as a cofactor. It depends on Ni(2+) as a cofactor.

It carries out the reaction a tRNA precursor + 2 CTP + ATP = a tRNA with a 3' CCA end + 3 diphosphate. It catalyses the reaction a tRNA with a 3' CCA end + 2 CTP + ATP = a tRNA with a 3' CCACCA end + 3 diphosphate. Its function is as follows. Catalyzes the addition and repair of the essential 3'-terminal CCA sequence in tRNAs without using a nucleic acid template. Adds these three nucleotides in the order of C, C, and A to the tRNA nucleotide-73, using CTP and ATP as substrates and producing inorganic pyrophosphate. tRNA 3'-terminal CCA addition is required both for tRNA processing and repair. Also involved in tRNA surveillance by mediating tandem CCA addition to generate a CCACCA at the 3' terminus of unstable tRNAs. While stable tRNAs receive only 3'-terminal CCA, unstable tRNAs are marked with CCACCA and rapidly degraded. The chain is Multifunctional CCA protein from Vibrio cholerae serotype O1 (strain ATCC 39541 / Classical Ogawa 395 / O395).